A 281-amino-acid chain; its full sequence is 2-dehydro-3-deoxyphosphooctonate aldolase (281 aa).

The protein belongs to the KdsA family.

It localises to the cytoplasm. The catalysed reaction is D-arabinose 5-phosphate + phosphoenolpyruvate + H2O = 3-deoxy-alpha-D-manno-2-octulosonate-8-phosphate + phosphate. It functions in the pathway carbohydrate biosynthesis; 3-deoxy-D-manno-octulosonate biosynthesis; 3-deoxy-D-manno-octulosonate from D-ribulose 5-phosphate: step 2/3. It participates in bacterial outer membrane biogenesis; lipopolysaccharide biosynthesis. The chain is 2-dehydro-3-deoxyphosphooctonate aldolase from Janthinobacterium sp. (strain Marseille) (Minibacterium massiliensis).